The sequence spans 78 residues: Large ribosomal subunit protein bL28 (78 aa).

This sequence belongs to the bacterial ribosomal protein bL28 family.

This chain is Large ribosomal subunit protein bL28, found in Edwardsiella ictaluri (strain 93-146).